Here is a 394-residue protein sequence, read N- to C-terminus: Phosphopentomutase (394 aa).

Mn(2+) contacts are provided by Asp13, Asp286, His291, Asp327, His328, and His339.

Belongs to the phosphopentomutase family. Mn(2+) serves as cofactor.

The protein resides in the cytoplasm. The enzyme catalyses 2-deoxy-alpha-D-ribose 1-phosphate = 2-deoxy-D-ribose 5-phosphate. It carries out the reaction alpha-D-ribose 1-phosphate = D-ribose 5-phosphate. The protein operates within carbohydrate degradation; 2-deoxy-D-ribose 1-phosphate degradation; D-glyceraldehyde 3-phosphate and acetaldehyde from 2-deoxy-alpha-D-ribose 1-phosphate: step 1/2. Functionally, isomerase that catalyzes the conversion of deoxy-ribose 1-phosphate (dRib-1-P) and ribose 1-phosphate (Rib-1-P) to deoxy-ribose 5-phosphate (dRib-5-P) and ribose 5-phosphate (Rib-5-P), respectively. This is Phosphopentomutase from Bacillus cereus (strain B4264).